Reading from the N-terminus, the 175-residue chain is Peptide deformylase (175 aa).

Fe cation-binding residues include Cys96 and His138. Glu139 is a catalytic residue. His142 provides a ligand contact to Fe cation.

Belongs to the polypeptide deformylase family. It depends on Fe(2+) as a cofactor.

It catalyses the reaction N-terminal N-formyl-L-methionyl-[peptide] + H2O = N-terminal L-methionyl-[peptide] + formate. In terms of biological role, removes the formyl group from the N-terminal Met of newly synthesized proteins. Requires at least a dipeptide for an efficient rate of reaction. N-terminal L-methionine is a prerequisite for activity but the enzyme has broad specificity at other positions. The sequence is that of Peptide deformylase from Helicobacter acinonychis (strain Sheeba).